A 678-amino-acid chain; its full sequence is Photosystem I P700 chlorophyll a apoprotein A1 (678 aa).

Transmembrane regions (helical) follow at residues 75 to 98, 152 to 175, 192 to 216, 266 to 284, 302 to 325, 341 to 367, 384 to 406, and 458 to 476; these read VFAA…FHGA, LKVI…FHMH, STHH…HISL, SAMH…SVLG, WHLV…QMSN, VSLF…IGLV, IILG…LYVH, and FMVT…LILV. Residues C500 and C509 each contribute to the [4Fe-4S] cluster site. The next 2 membrane-spanning stretches (helical) occupy residues 516 to 537 and 591 to 613; these read HVFL…HFFW and LAAY…MFLF. H602 contributes to the chlorophyll a' binding site. Residues M610 and Y618 each coordinate chlorophyll a. W619 contacts phylloquinone. The chain crosses the membrane as a helical span at residues 651–671; sequence AVGFTHYLLGGIGSTWSFFLA.

This sequence belongs to the PsaA/PsaB family. In terms of assembly, the PsaA/B heterodimer binds the P700 chlorophyll special pair and subsequent electron acceptors. PSI consists of a core antenna complex that captures photons, and an electron transfer chain that converts photonic excitation into a charge separation. The eukaryotic PSI reaction center is composed of at least 11 subunits. P700 is a chlorophyll a/chlorophyll a' dimer, A0 is one or more chlorophyll a, A1 is one or both phylloquinones and FX is a shared 4Fe-4S iron-sulfur center. is required as a cofactor.

The protein localises to the plastid. The protein resides in the chloroplast thylakoid membrane. It catalyses the reaction reduced [plastocyanin] + hnu + oxidized [2Fe-2S]-[ferredoxin] = oxidized [plastocyanin] + reduced [2Fe-2S]-[ferredoxin]. PsaA and PsaB bind P700, the primary electron donor of photosystem I (PSI), as well as the electron acceptors A0, A1 and FX. PSI is a plastocyanin/cytochrome c6-ferredoxin oxidoreductase, converting photonic excitation into a charge separation, which transfers an electron from the donor P700 chlorophyll pair to the spectroscopically characterized acceptors A0, A1, FX, FA and FB in turn. Oxidized P700 is reduced on the lumenal side of the thylakoid membrane by plastocyanin or cytochrome c6. This chain is Photosystem I P700 chlorophyll a apoprotein A1, found in Amphidinium carterae (Dinoflagellate).